Consider the following 199-residue polypeptide: MAEEQVLNTHNASILLSAANKSHYPKDDLPEIALAGRSNVGKSSFINTILGRKNLARTSSKPGKTQLLNFFNIDDKLRFVDVPGYGYAKVSKSERAKWGKMIEEYLTSRDNLRAVVSLVDLRHAPSKEDIQMYDFLKYYDIPVIVVATKADKIPRGKWNKHESVVKKALNFDNSDTFIVFSSVERIGIDDSWDAILEQV.

The EngB-type G domain maps to aspartate 28–valine 199. GTP-binding positions include glycine 36–serine 43, glycine 63–leucine 67, aspartate 81–glycine 84, threonine 148–aspartate 151, and phenylalanine 180–serine 182. Mg(2+) contacts are provided by serine 43 and threonine 65.

The protein belongs to the TRAFAC class TrmE-Era-EngA-EngB-Septin-like GTPase superfamily. EngB GTPase family. Requires Mg(2+) as cofactor.

Functionally, necessary for normal cell division and for the maintenance of normal septation. The sequence is that of Probable GTP-binding protein EngB from Streptococcus pyogenes serotype M28 (strain MGAS6180).